A 510-amino-acid chain; its full sequence is GMP synthase [glutamine-hydrolyzing] (510 aa).

In terms of domain architecture, Glutamine amidotransferase type-1 spans 5 to 194 (DILVLDFGSQ…FAKICGCEST (190 aa)). The active-site Nucleophile is cysteine 82. Residues histidine 169 and glutamate 171 contribute to the active site. Residues 195-385 (WNMGSFAKKE…LGLSRDIVYR (191 aa)) form the GMPS ATP-PPase domain. Position 222–228 (222–228 (SGGVDSS)) interacts with ATP.

Homodimer.

It catalyses the reaction XMP + L-glutamine + ATP + H2O = GMP + L-glutamate + AMP + diphosphate + 2 H(+). The protein operates within purine metabolism; GMP biosynthesis; GMP from XMP (L-Gln route): step 1/1. In terms of biological role, catalyzes the synthesis of GMP from XMP. In Campylobacter fetus subsp. fetus (strain 82-40), this protein is GMP synthase [glutamine-hydrolyzing].